The chain runs to 270 residues: 5'-AMP-activated protein kinase subunit beta-1 (270 aa).

A disordered region spans residues 1-43 (MGNTSSERAALERHGGHKTPRRDSSGGTKDGDRPKILMDSPED). Gly-2 is lipidated: N-myristoyl glycine. Thr-4 bears the Phosphothreonine mark. Phosphoserine is present on residues Ser-5 and Ser-6. Position 19 is a phosphothreonine (Thr-19). A compositionally biased stretch (basic and acidic residues) spans 21 to 36 (RRDSSGGTKDGDRPKI). Phosphoserine; by autocatalysis is present on residues Ser-24 and Ser-25. 4 positions are modified to phosphoserine: Ser-40, Ser-96, Ser-101, and Ser-108. A glycogen-binding domain region spans residues 68 to 163 (EVNDKAPAQA…QVKKTDFEVF (96 aa)). Phosphothreonine is present on Thr-148. Ser-182 bears the Phosphoserine mark.

Belongs to the 5'-AMP-activated protein kinase beta subunit family. As to quaternary structure, AMPK is a heterotrimer of an alpha catalytic subunit (PRKAA1 or PRKAA2), a beta (PRKAB1 or PRKAB2) and a gamma non-catalytic subunits (PRKAG1, PRKAG2 or PRKAG3). Interacts with FNIP1 and FNIP2. Phosphorylated when associated with the catalytic subunit (PRKAA1 or PRKAA2). Phosphorylated by ULK1; leading to negatively regulate AMPK activity and suggesting the existence of a regulatory feedback loop between ULK1 and AMPK.

In terms of biological role, non-catalytic subunit of AMP-activated protein kinase (AMPK), an energy sensor protein kinase that plays a key role in regulating cellular energy metabolism. In response to reduction of intracellular ATP levels, AMPK activates energy-producing pathways and inhibits energy-consuming processes: inhibits protein, carbohydrate and lipid biosynthesis, as well as cell growth and proliferation. AMPK acts via direct phosphorylation of metabolic enzymes, and by longer-term effects via phosphorylation of transcription regulators. Also acts as a regulator of cellular polarity by remodeling the actin cytoskeleton; probably by indirectly activating myosin. Beta non-catalytic subunit acts as a scaffold on which the AMPK complex assembles, via its C-terminus that bridges alpha (PRKAA1 or PRKAA2) and gamma subunits (PRKAG1, PRKAG2 or PRKAG3). The protein is 5'-AMP-activated protein kinase subunit beta-1 (PRKAB1) of Homo sapiens (Human).